The sequence spans 304 residues: MTRTHDDEWDLASSVGATATMVAAGRAMATKDPRGLIDDPFAEPLVRAVGVDFFTKMMDGELDLDAIENATPVRIQSMVDGMAVRTKYFDDYFVDATDAGVRRVVILASGLDSRAYRLPWPAGTVVYEIDQPRVIEFKSNTLAEVGAEPTATRRTIPIDLRGDWPAALSAAGFDPAAPTAWLAEGLLIYLPPEAQDRLFDNITALSAPGSTIATEFVPGIVDFDAERVREMSGSFRQHGVDIDMASLVYAGERNHVIDYLNGLGWRAEGVTRTELFHRHGIEVPAPENDDPLGEIIFISATRTR.

Residues Asp-130 and Asp-159 to Leu-160 each bind S-adenosyl-L-methionine.

It belongs to the UPF0677 family.

Functionally, exhibits S-adenosyl-L-methionine-dependent methyltransferase activity. This chain is Putative S-adenosyl-L-methionine-dependent methyltransferase MAP_4189c, found in Mycolicibacterium paratuberculosis (strain ATCC BAA-968 / K-10) (Mycobacterium paratuberculosis).